Here is a 488-residue protein sequence, read N- to C-terminus: Probable glycine dehydrogenase (decarboxylating) subunit 2 (488 aa).

Residue Lys-274 is modified to N6-(pyridoxal phosphate)lysine.

The protein belongs to the GcvP family. C-terminal subunit subfamily. As to quaternary structure, the glycine cleavage system is composed of four proteins: P, T, L and H. In this organism, the P 'protein' is a heterodimer of two subunits. Pyridoxal 5'-phosphate serves as cofactor.

It catalyses the reaction N(6)-[(R)-lipoyl]-L-lysyl-[glycine-cleavage complex H protein] + glycine + H(+) = N(6)-[(R)-S(8)-aminomethyldihydrolipoyl]-L-lysyl-[glycine-cleavage complex H protein] + CO2. Its function is as follows. The glycine cleavage system catalyzes the degradation of glycine. The P protein binds the alpha-amino group of glycine through its pyridoxal phosphate cofactor; CO(2) is released and the remaining methylamine moiety is then transferred to the lipoamide cofactor of the H protein. The chain is Probable glycine dehydrogenase (decarboxylating) subunit 2 from Listeria monocytogenes serotype 4b (strain F2365).